The following is a 113-amino-acid chain: Single-stranded DNA-binding protein B (113 aa).

The SSB domain maps to 1–104 (MFNQVMLVGR…VLADTVRFMD (104 aa)). Phosphotyrosine is present on Tyr82.

As to quaternary structure, homotetramer. Phosphorylated by YwqD, which increases ssDNA affinity; dephosphorylated by YwqE.

It is found in the cytoplasm. Functionally, not essential for replication of the chromosome, but is required for optimal competence. Binds ssDNA, binding is facilitated by DprA, acts as an accessory factor for homologous DNA strand exchange. The chain is Single-stranded DNA-binding protein B (ssbB) from Bacillus subtilis (strain 168).